A 101-amino-acid chain; its full sequence is Small ribosomal subunit protein cS23 (101 aa).

It belongs to the chloroplast-specific ribosomal protein cS23 family. Part of the 30S ribosomal subunit.

It localises to the plastid. The protein resides in the chloroplast. Its function is as follows. Probably a ribosomal protein or a ribosome-associated protein. This is Small ribosomal subunit protein cS23 (ycf65) from Euglena mutabilis.